A 156-amino-acid polypeptide reads, in one-letter code: 6,7-dimethyl-8-ribityllumazine synthase (156 aa).

5-amino-6-(D-ribitylamino)uracil contacts are provided by residues Phe-22, 56-58 (ALE), and 80-82 (AVI). 85–86 (DT) lines the (2S)-2-hydroxy-3-oxobutyl phosphate pocket. His-88 (proton donor) is an active-site residue. Residue Phe-113 coordinates 5-amino-6-(D-ribitylamino)uracil. Residue Arg-127 coordinates (2S)-2-hydroxy-3-oxobutyl phosphate.

It belongs to the DMRL synthase family.

The catalysed reaction is (2S)-2-hydroxy-3-oxobutyl phosphate + 5-amino-6-(D-ribitylamino)uracil = 6,7-dimethyl-8-(1-D-ribityl)lumazine + phosphate + 2 H2O + H(+). It participates in cofactor biosynthesis; riboflavin biosynthesis; riboflavin from 2-hydroxy-3-oxobutyl phosphate and 5-amino-6-(D-ribitylamino)uracil: step 1/2. Catalyzes the formation of 6,7-dimethyl-8-ribityllumazine by condensation of 5-amino-6-(D-ribitylamino)uracil with 3,4-dihydroxy-2-butanone 4-phosphate. This is the penultimate step in the biosynthesis of riboflavin. This Leuconostoc mesenteroides subsp. mesenteroides (strain ATCC 8293 / DSM 20343 / BCRC 11652 / CCM 1803 / JCM 6124 / NCDO 523 / NBRC 100496 / NCIMB 8023 / NCTC 12954 / NRRL B-1118 / 37Y) protein is 6,7-dimethyl-8-ribityllumazine synthase.